The primary structure comprises 451 residues: Phosphoglucosamine mutase (451 aa).

Ser-101 functions as the Phosphoserine intermediate in the catalytic mechanism. The Mg(2+) site is built by Ser-101, Asp-243, Asp-245, and Asp-247. Ser-101 is modified (phosphoserine).

It belongs to the phosphohexose mutase family. Mg(2+) serves as cofactor. In terms of processing, activated by phosphorylation.

It catalyses the reaction alpha-D-glucosamine 1-phosphate = D-glucosamine 6-phosphate. Its function is as follows. Catalyzes the conversion of glucosamine-6-phosphate to glucosamine-1-phosphate. The protein is Phosphoglucosamine mutase of Geobacter metallireducens (strain ATCC 53774 / DSM 7210 / GS-15).